A 298-amino-acid polypeptide reads, in one-letter code: N-acetylmuramic acid 6-phosphate etherase (298 aa).

Residues 54–217 (CISAIKNHGR…STVTMIKLGK (164 aa)) enclose the SIS domain. The active-site Proton donor is glutamate 82. Glutamate 113 is a catalytic residue.

Belongs to the GCKR-like family. MurNAc-6-P etherase subfamily. As to quaternary structure, homodimer.

It carries out the reaction N-acetyl-D-muramate 6-phosphate + H2O = N-acetyl-D-glucosamine 6-phosphate + (R)-lactate. Its pathway is amino-sugar metabolism; N-acetylmuramate degradation. In terms of biological role, specifically catalyzes the cleavage of the D-lactyl ether substituent of MurNAc 6-phosphate, producing GlcNAc 6-phosphate and D-lactate. The polypeptide is N-acetylmuramic acid 6-phosphate etherase (Petrotoga mobilis (strain DSM 10674 / SJ95)).